Consider the following 156-residue polypeptide: Small ribosomal subunit protein uS7 (156 aa).

It belongs to the universal ribosomal protein uS7 family. Part of the 30S ribosomal subunit. Contacts proteins S9 and S11.

Functionally, one of the primary rRNA binding proteins, it binds directly to 16S rRNA where it nucleates assembly of the head domain of the 30S subunit. Is located at the subunit interface close to the decoding center, probably blocks exit of the E-site tRNA. This is Small ribosomal subunit protein uS7 from Neisseria gonorrhoeae (strain ATCC 700825 / FA 1090).